We begin with the raw amino-acid sequence, 258 residues long: Phosphate import ATP-binding protein PstB (258 aa).

Residues 13–253 form the ABC transporter domain; it reads IEVENLNLWY…PKEQSTEDYI (241 aa). Position 45–52 (45–52) interacts with ATP; that stretch reads GPSGCGKS.

It belongs to the ABC transporter superfamily. Phosphate importer (TC 3.A.1.7) family. As to quaternary structure, the complex is composed of two ATP-binding proteins (PstB), two transmembrane proteins (PstC and PstA) and a solute-binding protein (PstS).

The protein localises to the cell membrane. It catalyses the reaction phosphate(out) + ATP + H2O = ADP + 2 phosphate(in) + H(+). Part of the ABC transporter complex PstSACB involved in phosphate import. Responsible for energy coupling to the transport system. The sequence is that of Phosphate import ATP-binding protein PstB from Methanosarcina acetivorans (strain ATCC 35395 / DSM 2834 / JCM 12185 / C2A).